The primary structure comprises 170 residues: Large ribosomal subunit protein uL10 (170 aa).

It belongs to the universal ribosomal protein uL10 family. As to quaternary structure, part of the ribosomal stalk of the 50S ribosomal subunit. The N-terminus interacts with L11 and the large rRNA to form the base of the stalk. The C-terminus forms an elongated spine to which L12 dimers bind in a sequential fashion forming a multimeric L10(L12)X complex.

Forms part of the ribosomal stalk, playing a central role in the interaction of the ribosome with GTP-bound translation factors. The chain is Large ribosomal subunit protein uL10 from Lactobacillus helveticus (strain DPC 4571).